We begin with the raw amino-acid sequence, 397 residues long: Cathepsin E-A (397 aa).

Residues 1-16 (MRQILVLLLFATLVYG) form the signal peptide. A propeptide spans 17–52 (LIRVPLKRQKSIRKTLKEKGKLSHIWTQQGIDMVQY) (activation peptide). Residues 74–385 (YFGEISVGTP…DRGNNRVGLA (312 aa)) enclose the Peptidase A1 domain. N-linked (GlcNAc...) asparagine glycosylation is present at Asn-86. Asp-92 is a catalytic residue. A disulfide bridge connects residues Cys-105 and Cys-110. Asn-130 is a glycosylation site (N-linked (GlcNAc...) asparagine). Residues Cys-268 and Cys-272 are joined by a disulfide bond. Asp-277 is a catalytic residue. The cysteines at positions 310 and 344 are disulfide-linked.

Belongs to the peptidase A1 family. As to quaternary structure, homodimer; disulfide-linked. In terms of processing, glycosylated. Contains high mannose-type oligosaccharide. As to expression, expressed predominantly in the larval foregut and the anterior and posterior adult stomach.

The protein resides in the endosome. It carries out the reaction Similar to cathepsin D, but slightly broader specificity.. In terms of biological role, may have a role in immune function. Probably involved in the processing of antigenic peptides during MHC class II-mediated antigen presentation. This chain is Cathepsin E-A (ctse-a), found in Xenopus laevis (African clawed frog).